Reading from the N-terminus, the 255-residue chain is Small ribosomal subunit protein eS1 (255 aa).

The span at M1–K18 shows a compositional bias: basic residues. The disordered stretch occupies residues M1–D28. A2 is subject to N-acetylalanine; partial. Over residues R19 to D28 the composition is skewed to basic and acidic residues.

This sequence belongs to the eukaryotic ribosomal protein eS1 family. Component of the small ribosomal subunit. Mature ribosomes consist of a small (40S) and a large (60S) subunit. The 40S subunit contains about 33 different proteins and 1 molecule of RNA (18S). The 60S subunit contains about 49 different proteins and 3 molecules of RNA (25S, 5.8S and 5S).

The protein localises to the cytoplasm. The sequence is that of Small ribosomal subunit protein eS1 from Ajellomyces dermatitidis (strain ER-3 / ATCC MYA-2586) (Blastomyces dermatitidis).